The sequence spans 322 residues: 4-diphosphocytidyl-2-C-methyl-D-erythritol kinase (322 aa).

Lysine 18 is an active-site residue. Residue 130-140 (PMGAGLGGGSS) participates in ATP binding. Aspartate 172 is a catalytic residue.

Belongs to the GHMP kinase family. IspE subfamily.

The catalysed reaction is 4-CDP-2-C-methyl-D-erythritol + ATP = 4-CDP-2-C-methyl-D-erythritol 2-phosphate + ADP + H(+). It participates in isoprenoid biosynthesis; isopentenyl diphosphate biosynthesis via DXP pathway; isopentenyl diphosphate from 1-deoxy-D-xylulose 5-phosphate: step 3/6. Its function is as follows. Catalyzes the phosphorylation of the position 2 hydroxy group of 4-diphosphocytidyl-2C-methyl-D-erythritol. This Psychrobacter cryohalolentis (strain ATCC BAA-1226 / DSM 17306 / VKM B-2378 / K5) protein is 4-diphosphocytidyl-2-C-methyl-D-erythritol kinase.